The chain runs to 504 residues: Maturase K (504 aa).

It belongs to the intron maturase 2 family. MatK subfamily.

It localises to the plastid. The protein resides in the chloroplast. Usually encoded in the trnK tRNA gene intron. Probably assists in splicing its own and other chloroplast group II introns. The polypeptide is Maturase K (Quercus robur (English oak)).